A 255-amino-acid chain; its full sequence is uncharacterized protein (255 aa).

A run of 2 helical transmembrane segments spans residues 99-119 and 146-166; these read ISLI…ITSF and YIGS…ILFL.

The protein resides in the mitochondrion membrane. This is an uncharacterized protein from Schizosaccharomyces pombe (strain 972 / ATCC 24843) (Fission yeast).